The primary structure comprises 469 residues: Protein apterous (469 aa).

2 disordered regions span residues 21–44 and 111–141; these read GPGA…CGSA and EVSD…DSKI. 2 LIM zinc-binding domains span residues 148–200 and 210–263; these read CSGC…CKND and CSRC…CRTH. A DNA-binding region (homeobox) is located at residues 367–426; it reads TKRMRTSFKHHQLRTMKSYFAINHNPDAKDLKQLSQKTGLPKRVLQVWFQNARAKWRRMM.

Expressed in PNS and CNS.

It is found in the nucleus. Its function is as follows. Required for the normal development of the wing and halter imaginal disks. This is Protein apterous (ap) from Drosophila melanogaster (Fruit fly).